Here is a 159-residue protein sequence, read N- to C-terminus: MNIQIITVGKLKEKYLVQGIAEYLKRLTAYAKVTIVEVPDEKAPEVLSDAEMKQVKDKEGVRILAKIPDDTHVIALAIDGKMKSSEEFAADLDKLATYGKSKVAFVIGGSLGLSESVLKRSDEQISFGRLTLPHQLMRLVLVEQVYRAFRIVRGEPYHK.

S-adenosyl-L-methionine contacts are provided by residues L76, G108, and 127–132 (FGRLTL).

Belongs to the RNA methyltransferase RlmH family. In terms of assembly, homodimer.

It localises to the cytoplasm. It carries out the reaction pseudouridine(1915) in 23S rRNA + S-adenosyl-L-methionine = N(3)-methylpseudouridine(1915) in 23S rRNA + S-adenosyl-L-homocysteine + H(+). Its function is as follows. Specifically methylates the pseudouridine at position 1915 (m3Psi1915) in 23S rRNA. The polypeptide is Ribosomal RNA large subunit methyltransferase H (Listeria welshimeri serovar 6b (strain ATCC 35897 / DSM 20650 / CCUG 15529 / CIP 8149 / NCTC 11857 / SLCC 5334 / V8)).